The following is a 96-amino-acid chain: Nucleoid-associated protein DR_0199 (96 aa).

Belongs to the YbaB/EbfC family. As to quaternary structure, homodimer.

It is found in the cytoplasm. Its subcellular location is the nucleoid. Its function is as follows. Binds to DNA and alters its conformation. May be involved in regulation of gene expression, nucleoid organization and DNA protection. The protein is Nucleoid-associated protein DR_0199 of Deinococcus radiodurans (strain ATCC 13939 / DSM 20539 / JCM 16871 / CCUG 27074 / LMG 4051 / NBRC 15346 / NCIMB 9279 / VKM B-1422 / R1).